A 137-amino-acid chain; its full sequence is Peptide methionine sulfoxide reductase MsrB (137 aa).

Residues 7–129 (PDHPATELNE…NSASLSFTDG (123 aa)) form the MsrB domain. 4 residues coordinate Zn(2+): Cys46, Cys49, Cys95, and Cys98. The Nucleophile role is filled by Cys118.

The protein belongs to the MsrB Met sulfoxide reductase family. The cofactor is Zn(2+).

The catalysed reaction is L-methionyl-[protein] + [thioredoxin]-disulfide + H2O = L-methionyl-(R)-S-oxide-[protein] + [thioredoxin]-dithiol. The polypeptide is Peptide methionine sulfoxide reductase MsrB (Serratia proteamaculans (strain 568)).